A 166-amino-acid polypeptide reads, in one-letter code: Ribosome-binding factor A (166 aa).

A disordered region spans residues 119–166; sequence VQAQAKSGVYAGDEDPYVKPRVIGEDEDEDDEDGDDIDRSAPGYEPAH. The span at 143 to 154 shows a compositional bias: acidic residues; sequence EDEDEDDEDGDD.

Belongs to the RbfA family. As to quaternary structure, monomer. Binds 30S ribosomal subunits, but not 50S ribosomal subunits or 70S ribosomes.

It localises to the cytoplasm. Its function is as follows. One of several proteins that assist in the late maturation steps of the functional core of the 30S ribosomal subunit. Associates with free 30S ribosomal subunits (but not with 30S subunits that are part of 70S ribosomes or polysomes). Required for efficient processing of 16S rRNA. May interact with the 5'-terminal helix region of 16S rRNA. In Clavibacter michiganensis subsp. michiganensis (strain NCPPB 382), this protein is Ribosome-binding factor A.